Consider the following 431-residue polypeptide: Serine/threonine-protein kinase Sgk1 (431 aa).

Residues 1 to 60 are necessary for localization to the mitochondria; it reads MTVKAEAARSTLTYSRMRGMVAILIAFMKQRRMGLNDFIQKIASNTYACKHAEVQSILKM. The segment at 65–92 is disordered; that stretch reads EPELMNANPSPPPSPSQQINLGPSSNPH. At serine 74 the chain carries Phosphoserine. Serine 78 is subject to Phosphoserine; by MAPK7. A compositionally biased stretch (polar residues) spans 81–91; sequence QQINLGPSSNP. The region spanning 98–355 is the Protein kinase domain; that stretch reads FHFLKVIGKG…FMEIKSHIFF (258 aa). Residues 104–112 and lysine 127 contribute to the ATP site; that span reads IGKGSFGKV. The Nuclear localization signal motif lies at 131–141; that stretch reads KKAILKKKEEK. Aspartate 222 functions as the Proton acceptor in the catalytic mechanism. Phosphothreonine; by PDPK1 is present on threonine 256. An AGC-kinase C-terminal domain is found at 356–431; the sequence is SLINWDDLIN…SYAPPVDSFL (76 aa). A Phosphothreonine; by PKA modification is found at threonine 369. 3 positions are modified to phosphoserine: serine 397, serine 401, and serine 422.

It belongs to the protein kinase superfamily. AGC Ser/Thr protein kinase family. In terms of assembly, homodimer; disulfide-linked. Interacts with MAPK3/ERK1, MAPK1/ERK2, MAP2K1/MEK1, MAP2K2/MEK2, NEDD4, NEDD4L, MAPT/TAU, MAPK7, CREB1, SLC9A3R2/NHERF2 and KCNJ1/ROMK1. Forms a trimeric complex with FBXW7 and NOTCH1 Associates with the mammalian target of rapamycin complex 2 (mTORC2) via an interaction with MAPKAP1/SIN1. Regulated by phosphorylation. Activated by phosphorylation on Ser-422 by mTORC2, transforming it into a substrate for PDPK1 which phosphorylates it on Thr-256. Phosphorylation on Ser-397 and Ser-401 are also essential for its activity. Phosphorylation on Ser-78 by MAPK7 is required for growth factor-induced cell cycle progression. Post-translationally, ubiquitinated by NEDD4L; which promotes proteasomal degradation. Ubiquitinated by SYVN1 at the endoplasmic reticulum; which promotes rapid proteasomal degradation and maintains a high turnover rate in resting cells.

It is found in the cytoplasm. It localises to the nucleus. Its subcellular location is the endoplasmic reticulum membrane. The protein localises to the cell membrane. The protein resides in the mitochondrion. The enzyme catalyses L-seryl-[protein] + ATP = O-phospho-L-seryl-[protein] + ADP + H(+). The catalysed reaction is L-threonyl-[protein] + ATP = O-phospho-L-threonyl-[protein] + ADP + H(+). Two specific sites, one in the kinase domain (Thr-256) and the other in the C-terminal regulatory region (Ser-422), need to be phosphorylated for its full activation. Phosphorylation at Ser-397 and Ser-401 are also essential for its activity. Activated by WNK1, WNK2, WNK3 and WNK4; which promote phosphorylation by mTORC2. Functionally, serine/threonine-protein kinase which is involved in the regulation of a wide variety of ion channels, membrane transporters, cellular enzymes, transcription factors, neuronal excitability, cell growth, proliferation, survival, migration and apoptosis. Plays an important role in cellular stress response. Contributes to regulation of renal Na(+) retention, renal K(+) elimination, salt appetite, gastric acid secretion, intestinal Na(+)/H(+) exchange and nutrient transport, insulin-dependent salt sensitivity of blood pressure, salt sensitivity of peripheral glucose uptake, cardiac repolarization and memory consolidation. Up-regulates Na(+) channels: SCNN1A/ENAC, SCN5A and ASIC1/ACCN2, K(+) channels: KCNJ1/ROMK1, KCNA1-5, KCNQ1-5 and KCNE1, epithelial Ca(2+) channels: TRPV5 and TRPV6, chloride channels: BSND, CLCN2 and CFTR, glutamate transporters: SLC1A3/EAAT1, SLC1A2 /EAAT2, SLC1A1/EAAT3, SLC1A6/EAAT4 and SLC1A7/EAAT5, amino acid transporters: SLC1A5/ASCT2, SLC38A1/SN1 and SLC6A19, creatine transporter: SLC6A8, Na(+)/dicarboxylate cotransporter: SLC13A2/NADC1, Na(+)-dependent phosphate cotransporter: SLC34A2/NAPI-2B, glutamate receptor: GRIK2/GLUR6. Up-regulates carriers: SLC9A3/NHE3, SLC12A1/NKCC2, SLC12A3/NCC, SLC5A3/SMIT, SLC2A1/GLUT1, SLC5A1/SGLT1 and SLC15A2/PEPT2. Regulates enzymes: GSK3A/B, PMM2 and Na(+)/K(+) ATPase, and transcription factors: CTNNB1 and nuclear factor NF-kappa-B. Stimulates sodium transport into epithelial cells by enhancing the stability and expression of SCNN1A/ENAC. This is achieved by phosphorylating the NEDD4L ubiquitin E3 ligase, promoting its interaction with 14-3-3 proteins, thereby preventing it from binding to SCNN1A/ENAC and targeting it for degradation. Regulates store-operated Ca(+2) entry (SOCE) by stimulating ORAI1 and STIM1. Regulates KCNJ1/ROMK1 directly via its phosphorylation or indirectly via increased interaction with SLC9A3R2/NHERF2. Phosphorylates MDM2 and activates MDM2-dependent ubiquitination of p53/TP53. Phosphorylates MAPT/TAU and mediates microtubule depolymerization and neurite formation in hippocampal neurons. Phosphorylates SLC2A4/GLUT4 and up-regulates its activity. Phosphorylates APBB1/FE65 and promotes its localization to the nucleus. Phosphorylates MAPK1/ERK2 and activates it by enhancing its interaction with MAP2K1/MEK1 and MAP2K2/MEK2. Phosphorylates FBXW7 and plays an inhibitory role in the NOTCH1 signaling. Phosphorylates FOXO1 resulting in its relocalization from the nucleus to the cytoplasm. Phosphorylates FOXO3, promoting its exit from the nucleus and interference with FOXO3-dependent transcription. Phosphorylates BRAF and MAP3K3/MEKK3 and inhibits their activity. Phosphorylates SLC9A3/NHE3 in response to dexamethasone, resulting in its activation and increased localization at the cell membrane. Phosphorylates CREB1. Necessary for vascular remodeling during angiogenesis. The sequence is that of Serine/threonine-protein kinase Sgk1 (Sgk1) from Mus musculus (Mouse).